Consider the following 186-residue polypeptide: MAGHRLVLVLGDLHIPHRCNSLPAKFKKLLVPGKIQHILCTGNLCTKESYDYLKTLAGDVHIVRGDFDENLNYPEQKVVTVGQFKIGLIHGHQVIPWGDMASLALLQRQFDVDILISGHTHKFEAFEHENKFYINPGSATGAYNALETNIIPSFVLMDIQASTVVTYVYQLIGDDVKVERIEYKKS.

Lysine 54 bears the N6-acetyllysine mark.

The protein belongs to the VPS29 family. Component of the commander complex consisting of the CCC subcomplex and the retriever subcomplex. Component of the heterotrimeric retriever complex formed by VPS26C, VPS29 and VPS35L; within the complex interacts with VPS35L. Component of the heterotrimeric retromer cargo-selective complex (CSC), also described as vacuolar protein sorting subcomplex (VPS), formed by VPS26 (VPS26A or VPS26B), VPS29 and VPS35. The CSC has a highly elongated structure with VPS26 and VPS29 binding independently at opposite distal ends of VPS35 as central platform. The CSC is believed to associate with variable sorting nexins to form functionally distinct retromer complex variants. The originally described retromer complex (also called SNX-BAR retromer) is a pentamer containing the CSC and a heterodimeric membrane-deforming subcomplex formed between SNX1 or SNX2 and SNX5 or SNX6 (also called SNX-BAR subcomplex); the respective CSC and SNX-BAR subcomplexes associate with low affinity. The CSC associates with SNX3 to form a SNX3-retromer complex. The CSC associates with SNX27, the WASH complex and the SNX-BAR subcomplex to form the SNX27-retromer complex. Interacts with VPS26A, VPS35, SNX1, SNX2, SNX3, SNX27, WASHC5. Interacts with TBC1D5; this interaction is blocked by VPS35L in the retriever complex. Interacts with SNX17; the interaction is indirect; SNX17 (via its C-terminus) interacts with the retriever complex (via VPS26C and VPS35L). Interacts with VPS26B and ANKRD27.

Its subcellular location is the cytoplasm. The protein localises to the membrane. The protein resides in the endosome membrane. It is found in the early endosome. It localises to the late endosome. Component of the commander complex that is essential for endosomal recycling of transmembrane cargos; the commander complex is composed of the CCC subcomplex and the retriever subcomplex. Component of the retriever complex, which is a heterotrimeric complex related to retromer cargo-selective complex (CSC) and essential for retromer-independent retrieval and recycling of numerous cargos such as integrin alpha-5/beta-1 (ITGA5:ITGB1). Component of the retromer cargo-selective complex (CSC). The CSC is believed to be the core functional component of retromer or respective retromer complex variants acting to prevent missorting of selected transmembrane cargo proteins into the lysosomal degradation pathway. The recruitment of the CSC to the endosomal membrane involves RAB7A and SNX3. The SNX-BAR retromer mediates retrograde transport of cargo proteins from endosomes to the trans-Golgi network (TGN) and is involved in endosome-to-plasma membrane transport for cargo protein recycling. The SNX3-retromer mediates the retrograde endosome-to-TGN transport of WLS distinct from the SNX-BAR retromer pathway. The SNX27-retromer is believed to be involved in endosome-to-plasma membrane trafficking and recycling of a broad spectrum of cargo proteins. The CSC seems to act as recruitment hub for other proteins, such as the WASH complex and TBC1D5. Required to regulate transcytosis of the polymeric immunoglobulin receptor (pIgR-pIgA). In the endosomes, retriever complex drives the retrieval and recycling of NxxY-motif-containing cargo proteins by coupling to SNX17, a cargo essential for the homeostatic maintenance of numerous cell surface proteins associated with processes that include cell migration, cell adhesion, nutrient supply and cell signaling. The recruitment of the retriever complex to the endosomal membrane involves CCC and WASH complexes. Involved in GLUT1 endosome-to-plasma membrane trafficking; the function is dependent of association with ANKRD27. The protein is Vacuolar protein sorting-associated protein 29 (VPS29) of Bos taurus (Bovine).